A 391-amino-acid polypeptide reads, in one-letter code: O-methyltransferase ATR12 (391 aa).

Residues 233–234 (GG), D259, and 279–280 (DF) each bind S-adenosyl-L-methionine. H299 functions as the Proton acceptor in the catalytic mechanism.

The protein belongs to the class I-like SAM-binding methyltransferase superfamily. Cation-independent O-methyltransferase family. COMT subfamily.

It participates in mycotoxin biosynthesis. Functionally, O-methyltransferase; part of the core atranone cluster (CAC) which products are predicted to catalyze most or all steps of mycotoxin atranone synthesis, starting from geranylgeranyl pyrophosphate (GGPP). The initial cyclization of GGPP to dolabellane is probably performed by the terpene cyclase ATR13. The Baeyer-Villiger oxidation near the end of the atranone synthesis, which converts atranones D and E to atranones F and G is predicted to be catalyzed by the monooxygenase ATR8. Of the CAC's other predicted gene products, the reducing PKS ATR6 might synthesize a polyketide chain. This polyketide is probably transferred onto the atranone backbone by the polyketide transferase ATR5. Other predicted CAC products include 4 oxygenases (ATR2, ATR3, ATR4, and ATR14), 3 short-chain reductases (ATR7, ATR9, and ATR10), and a methyltransferase (ATR12). These may all be involved in the various steps of atranone biosynthesis, although their specific roles must await experimental determination. This is O-methyltransferase ATR12 from Stachybotrys chlorohalonatus (strain IBT 40285).